We begin with the raw amino-acid sequence, 301 residues long: Ribosomal protein L11 methyltransferase (301 aa).

Residues Thr-146, Gly-167, Asp-189, and Asn-234 each contribute to the S-adenosyl-L-methionine site.

It belongs to the methyltransferase superfamily. PrmA family.

It localises to the cytoplasm. It catalyses the reaction L-lysyl-[protein] + 3 S-adenosyl-L-methionine = N(6),N(6),N(6)-trimethyl-L-lysyl-[protein] + 3 S-adenosyl-L-homocysteine + 3 H(+). Functionally, methylates ribosomal protein L11. This Acinetobacter baumannii (strain SDF) protein is Ribosomal protein L11 methyltransferase.